A 431-amino-acid chain; its full sequence is MKETFQVGIIGFGDMGRLYAEYISKAGWRVNVCDRPENYESIQATYGNGGYTVLKDGFQVSRTSDYILYSVEAEHIDKVVALYGPATKVGAIVGGQTSCKAPEMNAFEKYLPEDVDIISCHSMHGPKVNPKSQPLVIIRHRASDEHFEIVNEILSCFKSSVVYLSAKEHDRITADTQAVTHAAFLTMGLAWHANNQYPWEINRWCGGIENIKMNLSMRIYSSKWHVYAGLAILNPEAQRQIQQYASSVTELFKLAISGKAKEYEDRIRNAGKFVFGENMDRNSSGLLLSDELLDQYSISNIPKDESKRNSHLSILAIVDSWSKLGIHPQNHMICSTPLFRLWVGVSEYVFRHPGLLDSCIYTATKHNDFSPDDLEFVVAVRSWSECVAAKDFTTYKKRFLETQEYFRPRFEEATRVGNAMISKLLENLQKM.

Residue 5–34 (FQVGIIGFGDMGRLYAEYISKAGWRVNVCD) participates in NADP(+) binding. The Prephenate/arogenate dehydrogenase domain maps to 5-285 (FQVGIIGFGD…GENMDRNSSG (281 aa)).

It belongs to the prephenate/arogenate dehydrogenase family.

The protein localises to the cytoplasm. The catalysed reaction is prephenate + NADP(+) = 3-(4-hydroxyphenyl)pyruvate + CO2 + NADPH. It participates in amino-acid biosynthesis; L-tyrosine biosynthesis; (4-hydroxyphenyl)pyruvate from prephenate (NADP(+) route): step 1/1. This is Probable prephenate dehydrogenase [NADP(+)] (tyr1) from Schizosaccharomyces pombe (strain 972 / ATCC 24843) (Fission yeast).